The sequence spans 527 residues: Ribonuclease Y (527 aa).

The helical transmembrane segment at 21 to 41 threads the bilayer; it reads ILAIFFSFIIGIVFGGMALFV. The tract at residues 78 to 97 is disordered; the sequence is READKTRNSAETELKERRSE. Residues 217-302 form the KH domain; the sequence is TTNVVPLPSD…EVVTKAKEEV (86 aa). The region spanning 343 to 436 is the HD domain; sequence VLQHSIEVAQ…VSAADAISSA (94 aa).

The protein belongs to the RNase Y family.

It localises to the cell membrane. Its function is as follows. Endoribonuclease that initiates mRNA decay. This chain is Ribonuclease Y, found in Dehalococcoides mccartyi (strain ATCC BAA-2100 / JCM 16839 / KCTC 5957 / BAV1).